The following is a 341-amino-acid chain: Aromatic amino acid aminotransferase (341 aa).

Residue K213 is modified to N6-(pyridoxal phosphate)lysine.

It belongs to the class-II pyridoxal-phosphate-dependent aminotransferase family. As to quaternary structure, homodimer. It depends on pyridoxal 5'-phosphate as a cofactor.

It catalyses the reaction an aromatic L-alpha-amino acid + 2-oxoglutarate = an aromatic oxo-acid + L-glutamate. Aminotransferase that catalyzes the conversion of aromatic amino acids and 2-oxoglutarate into corresponding aromatic oxo acids and L-glutamate. May catalyze the transamination reaction in phenylalanine biosynthesis. The sequence is that of Aromatic amino acid aminotransferase from Corynebacterium glutamicum (strain ATCC 13032 / DSM 20300 / JCM 1318 / BCRC 11384 / CCUG 27702 / LMG 3730 / NBRC 12168 / NCIMB 10025 / NRRL B-2784 / 534).